Here is a 357-residue protein sequence, read N- to C-terminus: Ribosomal RNA small subunit methyltransferase C (357 aa).

Belongs to the methyltransferase superfamily. RsmC family. In terms of assembly, monomer.

It localises to the cytoplasm. It catalyses the reaction guanosine(1207) in 16S rRNA + S-adenosyl-L-methionine = N(2)-methylguanosine(1207) in 16S rRNA + S-adenosyl-L-homocysteine + H(+). In terms of biological role, specifically methylates the guanine in position 1207 of 16S rRNA in the 30S particle. The polypeptide is Ribosomal RNA small subunit methyltransferase C (Colwellia psychrerythraea (strain 34H / ATCC BAA-681) (Vibrio psychroerythus)).